The sequence spans 174 residues: Transmembrane protein 208 (174 aa).

The next 3 membrane-spanning stretches (helical) occupy residues 30–50 (NMAIGCAAPALLLSFLVFEVT), 54–74 (VFMHILSLLILGSSYQFMAFM), and 111–131 (GTLLLALISNYFWLVLLLAPI). Positions 151–174 (AQDDNPQVDEKKQKKMDRRMRRMR) are disordered. A compositionally biased stretch (basic residues) spans 163-174 (QKKMDRRMRRMR).

This sequence belongs to the TMEM208 family. In terms of assembly, interacts with fz. Expressed in the brain.

It is found in the endoplasmic reticulum membrane. Its function is as follows. May play an important role during development and helps to maintain proper levels of Fz. The sequence is that of Transmembrane protein 208 from Drosophila melanogaster (Fruit fly).